The primary structure comprises 394 residues: Elongation factor Tu (394 aa).

A tr-type G domain is found at 10–204; the sequence is KPHVNVGTIG…AVDEWIPTPE (195 aa). The tract at residues 19–26 is G1; the sequence is GHIDHGKT. 19-26 is a binding site for GTP; the sequence is GHIDHGKT. Threonine 26 contacts Mg(2+). Positions 60–64 are G2; sequence GITIN. Residues 81–84 form a G3 region; it reads DCPG. Residues 81–85 and 136–139 each bind GTP; these read DCPGH and NKCD. Positions 136–139 are G4; the sequence is NKCD. Residues 174–176 are G5; it reads SAL.

The protein belongs to the TRAFAC class translation factor GTPase superfamily. Classic translation factor GTPase family. EF-Tu/EF-1A subfamily. As to quaternary structure, monomer.

It localises to the cytoplasm. It catalyses the reaction GTP + H2O = GDP + phosphate + H(+). Its function is as follows. GTP hydrolase that promotes the GTP-dependent binding of aminoacyl-tRNA to the A-site of ribosomes during protein biosynthesis. The polypeptide is Elongation factor Tu (Mycoplasma pneumoniae (strain ATCC 29342 / M129 / Subtype 1) (Mycoplasmoides pneumoniae)).